Here is a 172-residue protein sequence, read N- to C-terminus: Ribosome maturation factor RimM (172 aa).

Positions Ala95–Leu168 constitute a PRC barrel domain.

It belongs to the RimM family. Binds ribosomal protein uS19.

It localises to the cytoplasm. An accessory protein needed during the final step in the assembly of 30S ribosomal subunit, possibly for assembly of the head region. Essential for efficient processing of 16S rRNA. May be needed both before and after RbfA during the maturation of 16S rRNA. It has affinity for free ribosomal 30S subunits but not for 70S ribosomes. This Streptococcus equi subsp. zooepidemicus (strain MGCS10565) protein is Ribosome maturation factor RimM.